The chain runs to 577 residues: E3 ubiquitin-protein ligase MSL2 (577 aa).

The tract at residues 1-116 (MNPVNATALY…CEYITQTTLA (116 aa)) is sufficient for interaction with MSL1. Residues Cys-44, Cys-47, Cys-62, His-64, Cys-67, Cys-70, Cys-81, and Cys-84 each coordinate Zn(2+). The RING-type zinc-finger motif lies at 44 to 85 (CCVCGHLLQDPIAPTNSTCQHYVCKTCKGKKMMMKPSCSWCK). A Glycyl lysine isopeptide (Lys-Gly) (interchain with G-Cter in SUMO2) cross-link involves residue Lys-375. Residues 405-427 (TKSMKKSHEHGSKKSHSKTKPGI) form a disordered region. Basic residues predominate over residues 407 to 423 (SMKKSHEHGSKKSHSKT). Ser-447 is subject to Phosphoserine. The 52-residue stretch at 457–508 (QEKKGCKCGRATQNPSVLTCRGQRCPCYSNRKACLDCICRGCQNSYMANGEK) folds into the CXC MSL2-type domain. Zn(2+)-binding residues include Cys-462, Cys-464, Cys-476, Cys-481, Cys-483, Cys-490, Cys-493, Cys-495, and Cys-498.

This sequence belongs to the MSL2 family. As to quaternary structure, component of a multisubunit histone acetyltransferase complex (MSL) at least composed of the KAT8/MOF/MYST1, MSL1/hampin, MSL2 and MSL3. Forms a MSL heterotetrameric core with MSL1.

The protein localises to the nucleus. The protein resides in the chromosome. The catalysed reaction is S-ubiquitinyl-[E2 ubiquitin-conjugating enzyme]-L-cysteine + [acceptor protein]-L-lysine = [E2 ubiquitin-conjugating enzyme]-L-cysteine + N(6)-ubiquitinyl-[acceptor protein]-L-lysine.. It participates in protein modification; protein ubiquitination. Non-catalytic component of the MSL histone acetyltransferase complex, a multiprotein complex that mediates the majority of histone H4 acetylation at 'Lys-16' (H4K16ac), an epigenetic mark that prevents chromatin compaction. The MSL complex is required for chromosome stability and genome integrity by maintaining homeostatic levels of H4K16ac. The MSL complex is also involved in gene dosage by promoting up-regulation of genes expressed by the X chromosome. X up-regulation is required to compensate for autosomal biallelic expression. The MSL complex also participates in gene dosage compensation by promoting expression of Tsix non-coding RNA. MSL2 plays a key role in gene dosage by ensuring biallelic expression of a subset of dosage-sensitive genes, including many haploinsufficient genes. Acts by promoting promoter-enhancer contacts, thereby preventing DNA methylation of one allele and creating a methylation-free environment for methylation-sensitive transcription factors such as SP1, KANSL1 and KANSL3. Also acts as an E3 ubiquitin ligase that promotes monoubiquitination of histone H2B at 'Lys-35' (H2BK34Ub), but not that of H2A. This activity is greatly enhanced by heterodimerization with MSL1. H2B ubiquitination in turn stimulates histone H3 methylation at 'Lys-4' (H3K4me) and 'Lys-79' (H3K79me) and leads to gene activation, including that of HOXA9 and MEIS1. Also involved in the DNA damage response by mediating ubiquitination of TP53/p53 and TP53BP1. The sequence is that of E3 ubiquitin-protein ligase MSL2 from Homo sapiens (Human).